Consider the following 152-residue polypeptide: Small ribosomal subunit protein uS15 (152 aa).

A compositionally biased stretch (basic residues) spans 1–10; the sequence is MARMYARRRG. Residues 1–24 are disordered; that stretch reads MARMYARRRGTSSSVRPYRKEAPE.

It belongs to the universal ribosomal protein uS15 family. Part of the 30S ribosomal subunit.

The polypeptide is Small ribosomal subunit protein uS15 (Methanoculleus marisnigri (strain ATCC 35101 / DSM 1498 / JR1)).